A 1165-amino-acid chain; its full sequence is Vacuolar segregation protein 7 (1165 aa).

Residues methionine 1–asparagine 919 are Cytoplasmic-facing. Positions serine 118–leucine 147 are disordered. At serine 164 the chain carries Phosphoserine. Disordered stretches follow at residues serine 215 to leucine 241, lysine 274 to proline 423, leucine 461 to leucine 497, and glutamate 560 to leucine 668. Polar residues predominate over residues asparagine 216–threonine 230. Low complexity predominate over residues threonine 334–proline 345. Residues leucine 346–histidine 367 show a composition bias toward polar residues. A compositionally biased stretch (low complexity) spans serine 375 to asparagine 391. Over residues aspartate 393–asparagine 412 the composition is skewed to polar residues. The segment covering aspartate 413–proline 423 has biased composition (basic and acidic residues). Low complexity-rich tracts occupy residues glutamine 469–glutamine 485 and proline 562–proline 571. The segment covering serine 576–serine 587 has biased composition (polar residues). The segment covering serine 599–serine 613 has biased composition (low complexity). The span at threonine 614–glycine 662 shows a compositional bias: polar residues. The helical; Signal-anchor for type II membrane protein transmembrane segment at phenylalanine 920–leucine 940 threads the bilayer. The Vacuolar portion of the chain corresponds to leucine 941–lysine 1165. 2 N-linked (GlcNAc...) asparagine glycosylation sites follow: asparagine 1020 and asparagine 1099. Residues serine 1074–lysine 1121 are disordered. Acidic residues predominate over residues aspartate 1085 to asparagine 1100. The segment covering asparagine 1111–lysine 1121 has biased composition (basic and acidic residues).

In terms of assembly, component of the PI(3,5)P2 regulatory complex, composed of ATG18, FIG4, FAB1, VAC14 and VAC7. VAC14 nucleates the assembly of the complex and serves as a scaffold. N-glycosylated.

The protein localises to the vacuole membrane. Its function is as follows. The PI(3,5)P2 regulatory complex regulates both the synthesis and turnover of phosphatidylinositol 3,5-bisphosphate (PtdIns(3,5)P2). Positively regulates FAB1 kinase activity. Major activator of FAB1 during hyperosmotic shock and can elevate levels of PtdIns(3,5)P2 in the absence of VAC14 and FIG4. Directly involved in vacuolar membrane scission. Required for normal vacuole acidification, inheritance and morphology. This is Vacuolar segregation protein 7 (VAC7) from Saccharomyces cerevisiae (strain ATCC 204508 / S288c) (Baker's yeast).